The sequence spans 395 residues: Peptide-N(4)-(N-acetyl-beta-glucosaminyl)asparagine amidase (395 aa).

Positions 131, 134, 172, and 175 each coordinate Zn(2+). Catalysis depends on Cys198, which acts as the Nucleophile. Catalysis depends on residues His232 and Asp249. Glu252 serves as a coordination point for substrate. Residues 363–395 (PELTKTTPSTDLPSGRQSGSTEWTKSRGENGES) are disordered. Positions 366 to 385 (TKTTPSTDLPSGRQSGSTEW) are enriched in polar residues. Residues 386–395 (TKSRGENGES) are compositionally biased toward basic and acidic residues.

This sequence belongs to the transglutaminase-like superfamily. PNGase family. It depends on Zn(2+) as a cofactor.

It is found in the cytoplasm. The enzyme catalyses Hydrolysis of an N(4)-(acetyl-beta-D-glucosaminyl)asparagine residue in which the glucosamine residue may be further glycosylated, to yield a (substituted) N-acetyl-beta-D-glucosaminylamine and a peptide containing an aspartate residue.. Functionally, specifically deglycosylates the denatured form of N-linked glycoproteins in the cytoplasm and assists their proteasome-mediated degradation. Cleaves the beta-aspartyl-glucosamine (GlcNAc) of the glycan and the amide side chain of Asn, converting Asn to Asp. Prefers proteins containing high-mannose over those bearing complex type oligosaccharides. Can recognize misfolded proteins in the endoplasmic reticulum that are exported to the cytosol to be destroyed and deglycosylate them, while it has no activity toward native proteins. Deglycosylation is a prerequisite for subsequent proteasome-mediated degradation of some, but not all, misfolded glycoproteins. The polypeptide is Peptide-N(4)-(N-acetyl-beta-glucosaminyl)asparagine amidase (PNG1) (Candida albicans (strain SC5314 / ATCC MYA-2876) (Yeast)).